A 501-amino-acid chain; its full sequence is Armadillo repeat-containing protein 6 (501 aa).

Ser-64 bears the Phosphoserine mark. ARM repeat units lie at residues 220 to 264 (GVLP…HAHN), 274 to 318 (KGLK…DLGG), 319 to 369 (LSIL…RAGG), and 370 to 412 (TESI…VEGG). His-263 carries the post-translational modification Pros-methylhistidine.

This sequence belongs to the ARMC6 family. Post-translationally, methylated at His-263 by METTL9.

In Homo sapiens (Human), this protein is Armadillo repeat-containing protein 6 (ARMC6).